The primary structure comprises 420 residues: Mitochondrial chaperone BCS1 (420 aa).

Residues 1-15 (MTLSDFIGALKDNPY) are Mitochondrial intermembrane-facing. The chain crosses the membrane as a helical span at residues 16-32 (FGAGFGLVGVGTALAVA). Residues 33 to 420 (RKGAQVGMIF…AIKNIAEIKD (388 aa)) are Mitochondrial matrix-facing. 230–237 (GPPGCGKS) provides a ligand contact to ATP.

This sequence belongs to the AAA ATPase family. BCS1 subfamily.

Its subcellular location is the mitochondrion inner membrane. It carries out the reaction ATP + H2O = ADP + phosphate + H(+). Functionally, chaperone necessary for the incorporation of Rieske iron-sulfur protein uqcrfs1 into the mitochondrial respiratory chain complex III. The chain is Mitochondrial chaperone BCS1 (bcs1l) from Danio rerio (Zebrafish).